Here is a 439-residue protein sequence, read N- to C-terminus: Protease Do-like 1, chloroplastic (439 aa).

The segment at 154–323 (QGSGSGFVWD…IPVDTVGGIV (170 aa)) is serine protease. Catalysis depends on charge relay system residues H173, D203, and S282. The region spanning 326–423 (LVRFGKVTRP…EVTVEVLRGD (98 aa)) is the PDZ domain.

Belongs to the peptidase S1C family. As to quaternary structure, interacts with PTAC16 and other potential targets for degradation under high light conditions.

Its subcellular location is the plastid. The protein localises to the chloroplast thylakoid membrane. With respect to regulation, inhibited by phenylmethylsulfonyl fluoride and O-phenanthroline. Functionally, serine protease that is required at high temperature. May be involved in the degradation of damaged proteins. In vivo, can degrade beta-casein. The sequence is that of Protease Do-like 1, chloroplastic (DEGP1) from Arabidopsis thaliana (Mouse-ear cress).